Here is a 304-residue protein sequence, read N- to C-terminus: Retrotransposon Gag-like protein 4 (304 aa).

The segment at 276–293 (QLCVYCNQAGHFTRDCLA) adopts a CCHC-type zinc-finger fold.

As to expression, in adults, expressed in brain, eye, kidney, ovary and testis. Weakly expressed in thymus, heart and muscle.

Its function is as follows. Involved in cognitive function in the brain, possibly via the noradrenergic system. In Mus musculus (Mouse), this protein is Retrotransposon Gag-like protein 4.